Consider the following 508-residue polypeptide: Pancreatic alpha-amylase 2a5 (508 aa).

The signal sequence occupies residues 1–15 (MKFVLLLSLIGFCWA). Glutamine 16 is subject to Pyrrolidone carboxylic acid. 3 disulfides stabilise this stretch: cysteine 43/cysteine 101, cysteine 85/cysteine 130, and cysteine 156/cysteine 172. Residues asparagine 115, arginine 170, and aspartate 179 each contribute to the Ca(2+) site. Arginine 207 is a chloride binding site. Aspartate 209 serves as the catalytic Nucleophile. Histidine 213 contributes to the Ca(2+) binding site. Residue glutamate 245 is the Proton donor of the active site. Positions 310 and 349 each coordinate chloride. Intrachain disulfides connect cysteine 390-cysteine 396 and cysteine 462-cysteine 474.

It belongs to the glycosyl hydrolase 13 family. In terms of assembly, monomer. It depends on Ca(2+) as a cofactor. The cofactor is chloride.

The protein resides in the secreted. Its subcellular location is the extracellular space. It carries out the reaction Endohydrolysis of (1-&gt;4)-alpha-D-glucosidic linkages in polysaccharides containing three or more (1-&gt;4)-alpha-linked D-glucose units.. The protein is Pancreatic alpha-amylase 2a5 of Mus musculus (Mouse).